A 325-amino-acid chain; its full sequence is Golgi to ER traffic protein 4 homolog A (325 aa).

2 disordered regions span residues Met1–Gln22 and Ser306–Asp325. Residues Gly307–Glu317 are compositionally biased toward acidic residues.

It belongs to the GET4 family. As to quaternary structure, component of the bag6/bat3 complex.

It localises to the cytoplasm. It is found in the cytosol. As part of a cytosolic protein quality control complex, the bag6/bat3 complex, maintains misfolded and hydrophobic patches-containing proteins in a soluble state and participates in their proper delivery to the endoplasmic reticulum or alternatively can promote their sorting to the proteasome where they undergo degradation. The bag6/bat3 complex is involved in the post-translational delivery of tail-anchored/type II transmembrane proteins to the endoplasmic reticulum membrane. Similarly, the bag6/bat3 complex also functions as a sorting platform for proteins of the secretory pathway that are mislocalized to the cytosol either delivering them to the proteasome for degradation or to the endoplasmic reticulum. The bag6/bat3 complex also plays a role in the endoplasmic reticulum-associated degradation (ERAD), a quality control mechanism that eliminates unwanted proteins of the endoplasmic reticulum through their retrotranslocation to the cytosol and their targeting to the proteasome. It maintains these retrotranslocated proteins in an unfolded yet soluble state condition in the cytosol to ensure their proper delivery to the proteasome. The polypeptide is Golgi to ER traffic protein 4 homolog A (get4-a) (Xenopus laevis (African clawed frog)).